The sequence spans 607 residues: MDYRSLGLKVGLEIHIQLNTKRKLFCHCPPVLRDDEPHFRIERRLHLSVSELGAVDPAVLWEVRKRRRYIYEGYRDTTCLVELDEEPPHLPDEEALATAVAVAKMFNAKIFDEIHVMRKIVIDGSNVSGFQRTMLIAYGGKKKILGYDIGVETIALEEDAARKIAEEGKTVVYRLDRLGIPLIEIATEPMSYPPQQVEEVAWIIGYSVKITGRAKRGLGTVRQDVNVSIAGGAKTEIKGVPDLSLIPKVIEYEVQRQLSLLKISEELRRRGVGKLELSTVDVTQVFTNTKSKIVKRVLETGGKVVAVKTPGFQKIFGVEVQPGRRFGTELADYVRAWTELGGLLHSDELPGYGITAEEVRDIISKLGVESFILLMGVDDRELEEAATVVVDRLNTALQGVPEETRGANPDGTTRFLRPRPGAARMYPETDIPPIRITFEILKKSEEIAKVSLEGKLSELTSLGLSKDLALQLIKSPYLEKFEDYVSKYKVPPQQIATILLNISRALAREGVEITDEKIASVLEALEKKIITKEAVEEVLRNMKAGESAEEVAKRLGLVRMSYEEVKKVVGEVVREVGKDRALGEVMRRYRGRIDVEDVRRALSELYF.

It belongs to the GatB/GatE family. GatE subfamily. As to quaternary structure, heterodimer of GatD and GatE.

It catalyses the reaction L-glutamyl-tRNA(Gln) + L-glutamine + ATP + H2O = L-glutaminyl-tRNA(Gln) + L-glutamate + ADP + phosphate + H(+). Its function is as follows. Allows the formation of correctly charged Gln-tRNA(Gln) through the transamidation of misacylated Glu-tRNA(Gln) in organisms which lack glutaminyl-tRNA synthetase. The reaction takes place in the presence of glutamine and ATP through an activated gamma-phospho-Glu-tRNA(Gln). The GatDE system is specific for glutamate and does not act on aspartate. The sequence is that of Glutamyl-tRNA(Gln) amidotransferase subunit E from Pyrobaculum islandicum (strain DSM 4184 / JCM 9189 / GEO3).